Here is a 246-residue protein sequence, read N- to C-terminus: Trypsin V-A (246 aa).

A signal peptide spans Met-1–Ala-15. Residues Phe-16–Arg-24 constitute a propeptide, activation peptide. One can recognise a Peptidase S1 domain in the interval Ile-25–Ala-244. Cystine bridges form between Cys-31/Cys-160, Cys-49/Cys-65, Cys-133/Cys-233, Cys-140/Cys-206, Cys-171/Cys-185, and Cys-196/Cys-220. Residue His-64 is the Charge relay system of the active site. 3 residues coordinate Ca(2+): Glu-76, Asn-78, and Glu-86. Residue Asp-108 is the Charge relay system of the active site. Ser-200 acts as the Charge relay system in catalysis.

It belongs to the peptidase S1 family. Ca(2+) serves as cofactor.

Its subcellular location is the secreted. The protein localises to the extracellular space. The catalysed reaction is Preferential cleavage: Arg-|-Xaa, Lys-|-Xaa.. In Rattus norvegicus (Rat), this protein is Trypsin V-A.